Reading from the N-terminus, the 100-residue chain is Small ribosomal subunit protein eS24 (100 aa).

This sequence belongs to the eukaryotic ribosomal protein eS24 family.

This Methanothermobacter thermautotrophicus (strain ATCC 29096 / DSM 1053 / JCM 10044 / NBRC 100330 / Delta H) (Methanobacterium thermoautotrophicum) protein is Small ribosomal subunit protein eS24.